A 231-amino-acid polypeptide reads, in one-letter code: Orotidine 5'-phosphate decarboxylase (231 aa).

Substrate-binding positions include aspartate 11, lysine 33, aspartate 60–threonine 69, threonine 119, arginine 181, glutamine 190, glycine 210, and arginine 211. Catalysis depends on lysine 62, which acts as the Proton donor.

The protein belongs to the OMP decarboxylase family. Type 1 subfamily. In terms of assembly, homodimer.

It catalyses the reaction orotidine 5'-phosphate + H(+) = UMP + CO2. It functions in the pathway pyrimidine metabolism; UMP biosynthesis via de novo pathway; UMP from orotate: step 2/2. Functionally, catalyzes the decarboxylation of orotidine 5'-monophosphate (OMP) to uridine 5'-monophosphate (UMP). In Malacoplasma penetrans (strain HF-2) (Mycoplasma penetrans), this protein is Orotidine 5'-phosphate decarboxylase.